A 791-amino-acid polypeptide reads, in one-letter code: IQ motif and ubiquitin-like domain-containing protein (791 aa).

The interval 1-73 is disordered; it reads MSNQQEKYEA…SDQSFSSLEP (73 aa). A Ubiquitin-like domain is found at 131-207; that stretch reads ATVKVVLIPV…VQVEIFSTNP (77 aa). Residues 338 to 367 form the IQ domain; the sequence is RLKAVIVIQTYYRQWHAKIFVENLRRQKSL.

As to quaternary structure, component of the axonemal radial spoke 1 (RS1) complex, at least composed of spoke head proteins RSPH1, RSPH3, RSPH9 and the cilia-specific component RSPH4A or sperm-specific component RSPH6A, spoke stalk proteins RSPH14, DNAJB13, DYDC1, ROPN1L and NME5, and the anchor protein IQUB. Does not appear to be part of radial spoke complexes 2 or 3 (RS2 or RS3). Interacts with CALM1. Interacts with DNAJB13. Interacts with DYNLL2. Interacts with NME5. Interacts with RSPH3. Interacts with RSPH9. Interacts with ZMYND10. Interacts with calmodulin; the interaction occurs in conditions of low but not high calcium.

The protein localises to the cytoplasm. It is found in the cytoskeleton. Its subcellular location is the flagellum axoneme. It localises to the cell projection. The protein resides in the cilium. In terms of biological role, adapter protein that anchors the radial spoke 1 (RS1) complex to the A microtubule of outer doublet microtubules in axonemes. The triple radial spokes (RS1, RS2 and RS3) are required to modulate beating of the sperm flagellum. May play a role in inhibiting signaling via MAPK1/ERK2 and MAPK3/ERK1. Additionally, may play a role in the functioning of cilia. Not required for the functioning of tracheal or ependymal cilia. This Homo sapiens (Human) protein is IQ motif and ubiquitin-like domain-containing protein (IQUB).